A 183-amino-acid polypeptide reads, in one-letter code: NAD(P)H-quinone oxidoreductase subunit J (183 aa).

The disordered stretch occupies residues 1–21 (MAEENAQEKQAPPSAGEQSEP).

It belongs to the complex I 30 kDa subunit family. In terms of assembly, NDH-1 can be composed of about 15 different subunits; different subcomplexes with different compositions have been identified which probably have different functions.

It is found in the cellular thylakoid membrane. It carries out the reaction a plastoquinone + NADH + (n+1) H(+)(in) = a plastoquinol + NAD(+) + n H(+)(out). It catalyses the reaction a plastoquinone + NADPH + (n+1) H(+)(in) = a plastoquinol + NADP(+) + n H(+)(out). Its function is as follows. NDH-1 shuttles electrons from an unknown electron donor, via FMN and iron-sulfur (Fe-S) centers, to quinones in the respiratory and/or the photosynthetic chain. The immediate electron acceptor for the enzyme in this species is believed to be plastoquinone. Couples the redox reaction to proton translocation, and thus conserves the redox energy in a proton gradient. Cyanobacterial NDH-1 also plays a role in inorganic carbon-concentration. This Synechococcus sp. (strain JA-2-3B'a(2-13)) (Cyanobacteria bacterium Yellowstone B-Prime) protein is NAD(P)H-quinone oxidoreductase subunit J.